We begin with the raw amino-acid sequence, 314 residues long: Olfactory receptor 2Z1 (314 aa).

The Extracellular segment spans residues methionine 1 to glutamine 25. The N-linked (GlcNAc...) asparagine glycan is linked to asparagine 5. Residues leucine 26–isoleucine 49 form a helical membrane-spanning segment. At arginine 50 to threonine 57 the chain is on the cytoplasmic side. The helical transmembrane segment at proline 58–proline 79 threads the bilayer. At lysine 80–glutamine 100 the chain is on the extracellular side. A helical membrane pass occupies residues isoleucine 101 to tyrosine 120. The Cytoplasmic portion of the chain corresponds to aspartate 121–glutamine 139. A helical transmembrane segment spans residues valine 140 to isoleucine 158. Residues glutamine 159–tyrosine 195 are Extracellular-facing. A helical membrane pass occupies residues glutamate 196–glycine 219. The Cytoplasmic portion of the chain corresponds to histidine 220 to lysine 236. A helical transmembrane segment spans residues alanine 237–tyrosine 259. Residues methionine 260–asparagine 272 are Extracellular-facing. The chain crosses the membrane as a helical span at residues valine 273 to leucine 292. Residues arginine 293–cysteine 314 are Cytoplasmic-facing.

It belongs to the G-protein coupled receptor 1 family.

Its subcellular location is the cell membrane. Its function is as follows. Odorant receptor. In Homo sapiens (Human), this protein is Olfactory receptor 2Z1 (OR2Z1).